The following is a 92-amino-acid chain: Large ribosomal subunit protein eL42 (92 aa).

Zn(2+) contacts are provided by C11, C14, C70, and C73. The C4-type zinc finger occupies 11-73 (CPNCRKHTVH…LDLRLKCKEC (63 aa)).

Belongs to the eukaryotic ribosomal protein eL42 family. In terms of assembly, part of the 50S ribosomal subunit. The cofactor is Zn(2+).

Functionally, binds to the 23S rRNA. The sequence is that of Large ribosomal subunit protein eL42 from Methanothermobacter thermautotrophicus (strain ATCC 29096 / DSM 1053 / JCM 10044 / NBRC 100330 / Delta H) (Methanobacterium thermoautotrophicum).